The sequence spans 340 residues: Entry-fusion complex protein OPG094 (340 aa).

Gly2 carries N-myristoyl glycine; by host lipidation. At 2–319 (GGRVSVELPK…VQHNIKHSFD (318 aa)) the chain is on the virion surface side. The helical; Signal-anchor for type II membrane protein transmembrane segment at 320–340 (LKLHLISLLSLLVIWILIVAI) threads the bilayer.

The protein belongs to the orthopoxvirus OPG086 family. In terms of assembly, interacts with OPG143. Component of the entry fusion complex (EFC) composed of OPG053, OPG076, OPG086, OPG094, OPG095, OPG099, OPG107, OPG143, OPG104, OPG147 and OPG155. Except for OPG095 and OPG053, each of the EFC proteins is required for assembly or stability of the complex. Unglycosylated because produced in viral factories instead of the classic ER -Golgi route.

It is found in the virion membrane. Its function is as follows. Component of the entry fusion complex (EFC), which consists of 11 proteins. During cell infection, this complex mediates entry of the virion core into the host cytoplasm by a two-step mechanism consisting of lipid mixing of the viral and cellular membranes and subsequent pore formation. The protein is Entry-fusion complex protein OPG094 (OPG094) of Homo sapiens (Human).